The following is a 428-amino-acid chain: Inward rectifier potassium channel 2 (428 aa).

The Cytoplasmic segment spans residues 1 to 81; sequence MGSVRTNRYS…IFTTCVDIRW (81 aa). An S-nitrosocysteine modification is found at Cys76. A helical membrane pass occupies residues 82-106; the sequence is RWMLVIFCLAFVLSWLFFGCVFWLI. Topologically, residues 107 to 128 are extracellular; it reads ALLHGDLDTSKVSKACVSEVNS. Residues 129 to 140 constitute an intramembrane region (helical; Pore-forming); sequence FTAAFLFSIETQ. Positions 141–147 form an intramembrane region, pore-forming; sequence TTIGYGF. The short motif at 142–147 is the Selectivity filter element; that stretch reads TIGYGF. Over 148 to 156 the chain is Extracellular; the sequence is RCVTDECPI. The chain crosses the membrane as a helical span at residues 157–178; sequence AVFMVVFQSIVGCIIDAFIIGA. The Cytoplasmic segment spans residues 179–428; sequence VMAKMAKPKK…PRPLRRESEI (250 aa). The interval 181–208 is polyphosphoinositide (PIP2)-binding; it reads AKMAKPKKRNETLVFSHNAVIAMRDGKL. The interval 383–428 is disordered; sequence TSKEEEEDSENGVPESTSTDSPPGIDLHNQASVPLEPRPLRRESEI. The PDZ-binding signature appears at 426–428; sequence SEI.

Belongs to the inward rectifier-type potassium channel (TC 1.A.2.1) family. KCNJ2 subfamily. In terms of assembly, homotetramer. Homomultimeric and heteromultimeric association with KCNJ4/Kir2.3. Can form heteromeric channels with Kir2.6/KCNJ18. Associates, via its PDZ-recognition domain, with a complex containing LIN7A, LIN7B, LIN7C, DLG1, CASK and APBA1. Post-translationally, S-nitrosylation increases the open probability and inward rectifying currents. In terms of tissue distribution, prominently expressed in the central nervous system. Also found in other excitable tissues such as heart and skeletal muscle.

The protein localises to the cell membrane. The protein resides in the sarcolemma. Its subcellular location is the T-tubule. The enzyme catalyses K(+)(in) = K(+)(out). Its activity is regulated as follows. Activated by phosphatidylinositol 4,5 biphosphate (PtdIns(4,5)P2). In terms of biological role, inward rectifier potassium channels are characterized by a greater tendency to allow potassium to flow into the cell rather than out of it. Their voltage dependence is regulated by the concentration of extracellular potassium; as external potassium is raised, the voltage range of the channel opening shifts to more positive voltages. The inward rectification is mainly due to the blockage of outward current by internal magnesium. Can be blocked by extracellular barium and cesium. Probably participates in establishing action potential waveform and excitability of neuronal and muscle tissues. In Mus musculus (Mouse), this protein is Inward rectifier potassium channel 2 (Kcnj2).